We begin with the raw amino-acid sequence, 389 residues long: Sulfate adenylyltransferase (389 aa).

This sequence belongs to the sulfate adenylyltransferase family.

It carries out the reaction sulfate + ATP + H(+) = adenosine 5'-phosphosulfate + diphosphate. Its pathway is sulfur metabolism; hydrogen sulfide biosynthesis; sulfite from sulfate: step 1/3. The sequence is that of Sulfate adenylyltransferase from Microcystis aeruginosa (strain NIES-843 / IAM M-2473).